Consider the following 424-residue polypeptide: Protein ImpB (424 aa).

The 188-residue stretch at 2–189 (FALADINSFY…QPVGEVWGVG (188 aa)) folds into the UmuC domain.

The protein belongs to the DNA polymerase type-Y family.

Functionally, involved in UV protection and mutation. In Salmonella typhimurium, this protein is Protein ImpB (impB).